We begin with the raw amino-acid sequence, 432 residues long: CBL-interacting serine/threonine-protein kinase 17 (432 aa).

The 256-residue stretch at 11-266 folds into the Protein kinase domain; sequence YELGRTLGEG…IAGIKAHDWF (256 aa). ATP-binding positions include 17–25 and Lys40; that span reads LGEGNSAKV. The Proton acceptor role is filled by Asp134. Residues 152-181 are activation loop; sequence DFGLSALSQHYREDGLLHTTCGSPNYVAPE. The residue at position 156 (Ser156) is a Phosphoserine. Thr170 carries the post-translational modification Phosphothreonine. One can recognise an NAF domain in the interval 301–325; the sequence is DSPTIINAFQLIGMSSFLDLSGFFE. Residues 331–360 are PPI; the sequence is ERQIRFTSNSLAKDLLENIETIFTEMGFCL.

The protein belongs to the protein kinase superfamily. CAMK Ser/Thr protein kinase family. SNF1 subfamily. In terms of assembly, interacts with CBL1. The cofactor is Mn(2+).

The catalysed reaction is L-seryl-[protein] + ATP = O-phospho-L-seryl-[protein] + ADP + H(+). It carries out the reaction L-threonyl-[protein] + ATP = O-phospho-L-threonyl-[protein] + ADP + H(+). Its function is as follows. CIPK serine-threonine protein kinases interact with CBL proteins. Binding of a CBL protein to the regulatory NAF domain of CIPK protein lead to the activation of the kinase in a calcium-dependent manner. The polypeptide is CBL-interacting serine/threonine-protein kinase 17 (CIPK17) (Arabidopsis thaliana (Mouse-ear cress)).